The following is a 435-amino-acid chain: Serine carboxypeptidase-like 14 (435 aa).

The first 23 residues, 1-23 (MGSWIPKLLLLQLVLLLTKHADS), serve as a signal peptide directing secretion. Disulfide bonds link Cys-82/Cys-325, Cys-246/Cys-260, and Cys-284/Cys-291. Asn-103 is a glycosylation site (N-linked (GlcNAc...) asparagine). Ser-178 is a catalytic residue. An N-linked (GlcNAc...) asparagine glycan is attached at Asn-344. Asp-360 is a catalytic residue. N-linked (GlcNAc...) asparagine glycosylation is present at Asn-376. His-413 is an active-site residue.

It belongs to the peptidase S10 family. As to expression, expressed in senescent leaves.

The protein localises to the secreted. Functionally, probable carboxypeptidase. The sequence is that of Serine carboxypeptidase-like 14 (SCPL14) from Arabidopsis thaliana (Mouse-ear cress).